The sequence spans 306 residues: Elongation factor Ts (306 aa).

Residues 80–83 are involved in Mg(2+) ion dislocation from EF-Tu; the sequence is TDFV.

This sequence belongs to the EF-Ts family.

Its subcellular location is the cytoplasm. Associates with the EF-Tu.GDP complex and induces the exchange of GDP to GTP. It remains bound to the aminoacyl-tRNA.EF-Tu.GTP complex up to the GTP hydrolysis stage on the ribosome. This is Elongation factor Ts from Clostridium novyi (strain NT).